The sequence spans 274 residues: STVLLFSSILLMLKNNLNNEINESFTSMIIMSALLLKSGAAPFHFWFPNMMEGLTWMNALVLMTWQKIAPLMLISYLNIKYLLLISVILSVIIGAIGGLNQTSLRKLMAFSSINHLGWMLSSLMISESIWLIYFFFYSFLSFVLTFMFNIFKLFHLNQLFSWFVNSKILKFTLFMNFLSLGGLPPFLGFLPKWLVIQQLTLCNQYFLLLLMMMSTLITLFFYLRICYSAFMMNYFENNWIMKMNMISSNTNMYLIMTFFSIFGLFMISLFYFMF.

8 helical membrane-spanning segments follow: residues 28 to 48 (MIIM…FWFP), 54 to 74 (LTWM…LMLI), 79 to 99 (IKYL…IGGL), 107 to 127 (LMAF…MISE), 128 to 148 (SIWL…TFMF), 171 to 191 (FTLF…GFLP), 206 to 226 (FLLL…LRIC), and 254 to 274 (LIMT…YFMF).

Belongs to the complex I subunit 2 family.

It is found in the mitochondrion inner membrane. It carries out the reaction a ubiquinone + NADH + 5 H(+)(in) = a ubiquinol + NAD(+) + 4 H(+)(out). Functionally, core subunit of the mitochondrial membrane respiratory chain NADH dehydrogenase (Complex I) that is believed to belong to the minimal assembly required for catalysis. Complex I functions in the transfer of electrons from NADH to the respiratory chain. The immediate electron acceptor for the enzyme is believed to be ubiquinone. The polypeptide is NADH-ubiquinone oxidoreductase chain 2 (mt:ND2) (Drosophila mauritiana (Fruit fly)).